The following is a 471-amino-acid chain: 3-isopropylmalate dehydratase large subunit (471 aa).

[4Fe-4S] cluster contacts are provided by cysteine 347, cysteine 407, and cysteine 410. Residues 417 to 443 (TLQPGERSASTSNRNFEGRQGKGGRTH) form a disordered region.

It belongs to the aconitase/IPM isomerase family. LeuC type 1 subfamily. Heterodimer of LeuC and LeuD. [4Fe-4S] cluster serves as cofactor.

The enzyme catalyses (2R,3S)-3-isopropylmalate = (2S)-2-isopropylmalate. It participates in amino-acid biosynthesis; L-leucine biosynthesis; L-leucine from 3-methyl-2-oxobutanoate: step 2/4. Its function is as follows. Catalyzes the isomerization between 2-isopropylmalate and 3-isopropylmalate, via the formation of 2-isopropylmaleate. This chain is 3-isopropylmalate dehydratase large subunit, found in Nocardioides sp. (strain ATCC BAA-499 / JS614).